The primary structure comprises 1235 residues: Myosin-1 (1235 aa).

The interval 1-34 (MGITKRSKDKAARAERSAGGDKSSSAKPKKATFD) is disordered. Residues 9-19 (DKAARAERSAG) show a composition bias toward basic and acidic residues. One can recognise a Myosin motor domain in the interval 41–715 (IGVSDLTLLS…TLFALEHMRD (675 aa)). An ATP-binding site is contributed by 134–141 (GESGAGKT). The segment at 405–487 (SIGILDIYGF…PGIFSAMKDA (83 aa)) is actin-binding. IQ domains follow at residues 719–739 (HNMA…RAEA) and 740–765 (AIRI…EGHK). The region spanning 773 to 962 (RRRMSILGSR…TVHTQPGEPP (190 aa)) is the TH1 domain. Disordered regions lie at residues 949-1076 (YKSS…AAKP) and 1135-1235 (APPV…EDDW). Positions 982–1046 (KGKLIKPGGP…PGAAATPAAA (65 aa)) are enriched in low complexity. The segment covering 1050–1062 (PSHTRQQSSTSTV) has biased composition (polar residues). A compositionally biased stretch (pro residues) spans 1063-1073 (RPPPPPPPAPA). Residues 1075–1134 (KPKIMAKVLYDFAGTRENELSIKAGDMIEIVQKENNGWWLAKTPEGQAWVPAAYVEEQAP) form the SH3 domain. A compositionally biased stretch (pro residues) spans 1135–1150 (APPVVAPRPPPPPPPA). Polar residues predominate over residues 1180–1210 (SLQNRDSGMSLNGANGSGSDASRSSTPTPSI).

Belongs to the TRAFAC class myosin-kinesin ATPase superfamily. Myosin family.

Its subcellular location is the cytoplasm. It localises to the cytoskeleton. The protein resides in the actin patch. Functionally, type-I myosin implicated in the organization of the actin cytoskeleton. Required for proper actin cytoskeleton polarization. At the cell cortex, assembles in patch-like structures together with proteins from the actin-polymerizing machinery and promotes actin assembly. Functions as actin nucleation-promoting factor (NPF) for the Arp2/3 complex. This is Myosin-1 (myo-1) from Neurospora crassa (strain ATCC 24698 / 74-OR23-1A / CBS 708.71 / DSM 1257 / FGSC 987).